We begin with the raw amino-acid sequence, 149 residues long: Transcriptional repressor NrdR (149 aa).

A zinc finger spans residues 3–34 (CPFCSATDTKVIDSRLVADGHQVRRRRECVQC). The 91-residue stretch at 49–139 (PRVVKQDGSR…VYRAFEDVSE (91 aa)) folds into the ATP-cone domain.

Belongs to the NrdR family. It depends on Zn(2+) as a cofactor.

Functionally, negatively regulates transcription of bacterial ribonucleotide reductase nrd genes and operons by binding to NrdR-boxes. The sequence is that of Transcriptional repressor NrdR from Shewanella pealeana (strain ATCC 700345 / ANG-SQ1).